Consider the following 183-residue polypeptide: Capsid protein (183 aa).

Positions 136 to 183 (NAPILSTLPETTVVRRRGRSPRRRTPSPRRRRSQSPRRRRSQSRESQC) are disordered. Over residues 149-176 (VRRRGRSPRRRTPSPRRRRSQSPRRRRS) the composition is skewed to basic residues. A phosphoserine; by host mark is found at Ser155, Ser162, and Ser170. A 1; half-length repeat occupies 155–161 (SPRRRTP). Positions 155–177 (SPRRRTPSPRRRRSQSPRRRRSQ) are 3 X 8 AA repeats of S-P-R-R-R-[PR]-S-Q. A Bipartite nuclear localization signal motif is present at residues 158-175 (RRTPSPRRRRSQSPRRRR). A run of 2 repeats spans residues 162–169 (SPRRRRSQ) and 170–177 (SPRRRRSQ). Residues 177–183 (QSRESQC) form an RNA binding region.

It belongs to the orthohepadnavirus core antigen family. Homodimerizes, then multimerizes. Interacts with cytosol exposed regions of viral L glycoprotein present in the reticulum-to-Golgi compartment. Interacts with human FLNB. Phosphorylated form interacts with host importin alpha; this interaction depends on the exposure of the NLS, which itself depends upon genome maturation and/or phosphorylation of the capsid protein. Interacts with host NUP153. Phosphorylated by host SRPK1, SRPK2, and maybe protein kinase C or GAPDH. Phosphorylation is critical for pregenomic RNA packaging. Protein kinase C phosphorylation is stimulated by HBx protein and may play a role in transport of the viral genome to the nucleus at the late step during the viral replication cycle.

The protein localises to the virion. It localises to the host cytoplasm. Self assembles to form an icosahedral capsid. Most capsids appear to be large particles with an icosahedral symmetry of T=4 and consist of 240 copies of capsid protein, though a fraction forms smaller T=3 particles consisting of 180 capsid proteins. Entering capsids are transported along microtubules to the nucleus. Phosphorylation of the capsid is thought to induce exposure of nuclear localization signal in the C-terminal portion of the capsid protein that allows binding to the nuclear pore complex via the importin (karyopherin-) alpha and beta. Capsids are imported in intact form through the nuclear pore into the nuclear basket, where it probably binds NUP153. Only capsids that contain the mature viral genome can release the viral DNA and capsid protein into the nucleoplasm. Immature capsids get stuck in the basket. Capsids encapsulate the pre-genomic RNA and the P protein. Pre-genomic RNA is reverse-transcribed into DNA while the capsid is still in the cytoplasm. The capsid can then either be directed to the nucleus, providing more genomes for transcription, or bud through the endoplasmic reticulum to provide new virions. This Hepatitis B virus genotype D subtype ayw (isolate France/Tiollais/1979) (HBV-D) protein is Capsid protein.